A 273-amino-acid chain; its full sequence is DNA repair protein RecO (273 aa).

This sequence belongs to the RecO family.

Its function is as follows. Involved in DNA repair and RecF pathway recombination. This is DNA repair protein RecO from Saccharopolyspora erythraea (strain ATCC 11635 / DSM 40517 / JCM 4748 / NBRC 13426 / NCIMB 8594 / NRRL 2338).